The primary structure comprises 254 residues: Pyridoxine 5'-phosphate synthase (254 aa).

Asn8 lines the 3-amino-2-oxopropyl phosphate pocket. 10–11 (DH) provides a ligand contact to 1-deoxy-D-xylulose 5-phosphate. Arg19 contributes to the 3-amino-2-oxopropyl phosphate binding site. The Proton acceptor role is filled by His44. 1-deoxy-D-xylulose 5-phosphate contacts are provided by Arg46 and His51. Glu74 (proton acceptor) is an active-site residue. Thr104 provides a ligand contact to 1-deoxy-D-xylulose 5-phosphate. His198 acts as the Proton donor in catalysis. 3-amino-2-oxopropyl phosphate-binding positions include Gly199 and 220 to 221 (GH).

It belongs to the PNP synthase family. Homooctamer; tetramer of dimers.

Its subcellular location is the cytoplasm. It catalyses the reaction 3-amino-2-oxopropyl phosphate + 1-deoxy-D-xylulose 5-phosphate = pyridoxine 5'-phosphate + phosphate + 2 H2O + H(+). It functions in the pathway cofactor biosynthesis; pyridoxine 5'-phosphate biosynthesis; pyridoxine 5'-phosphate from D-erythrose 4-phosphate: step 5/5. Functionally, catalyzes the complicated ring closure reaction between the two acyclic compounds 1-deoxy-D-xylulose-5-phosphate (DXP) and 3-amino-2-oxopropyl phosphate (1-amino-acetone-3-phosphate or AAP) to form pyridoxine 5'-phosphate (PNP) and inorganic phosphate. The protein is Pyridoxine 5'-phosphate synthase of Caulobacter vibrioides (strain ATCC 19089 / CIP 103742 / CB 15) (Caulobacter crescentus).